The primary structure comprises 1323 residues: Sister chromatid cohesion protein PDS5 homolog A-B (1323 aa).

An HEAT repeat occupies 385 to 421 (FLVNDQLLGFVRERTLDKRWRVRKEAMMGLAQLYKKY). Positions 1138–1323 (PLNATGRRPY…TAQRQIDLHR (186 aa)) are disordered. Positions 1153-1165 (SEISNNVSINSES) are enriched in low complexity. Composition is skewed to polar residues over residues 1166-1176 (DASVANRQSSE) and 1210-1220 (LDQTAPSNTGT). The span at 1235–1246 (NIRKESEEKKVD) shows a compositional bias: basic and acidic residues.

In terms of assembly, interacts with the cohesin complex. Binds chromatin in a cohesin-dependent manner.

The protein localises to the nucleus. May regulate sister chromatid cohesion during mitosis and couple it to DNA replication. The sequence is that of Sister chromatid cohesion protein PDS5 homolog A-B (pds5a-b) from Xenopus laevis (African clawed frog).